Reading from the N-terminus, the 423-residue chain is UDP-N-acetylglucosamine 1-carboxyvinyltransferase 2 (423 aa).

Position 23-24 (23-24) interacts with phosphoenolpyruvate; sequence KN. Arg93 provides a ligand contact to UDP-N-acetyl-alpha-D-glucosamine. The active-site Proton donor is Cys117. Position 117 is a 2-(S-cysteinyl)pyruvic acid O-phosphothioketal (Cys117). UDP-N-acetyl-alpha-D-glucosamine-binding positions include 122–126, Asp305, and Ile327; that span reads RPIDQ.

This sequence belongs to the EPSP synthase family. MurA subfamily.

The protein localises to the cytoplasm. The enzyme catalyses phosphoenolpyruvate + UDP-N-acetyl-alpha-D-glucosamine = UDP-N-acetyl-3-O-(1-carboxyvinyl)-alpha-D-glucosamine + phosphate. The protein operates within cell wall biogenesis; peptidoglycan biosynthesis. Its function is as follows. Cell wall formation. Adds enolpyruvyl to UDP-N-acetylglucosamine. This Listeria innocua serovar 6a (strain ATCC BAA-680 / CLIP 11262) protein is UDP-N-acetylglucosamine 1-carboxyvinyltransferase 2.